Here is a 67-residue protein sequence, read N- to C-terminus: Alpha-toxin Bu1 (67 aa).

An LCN-type CS-alpha/beta domain is found at 3–65 (RDAYIADDKN…VPIRIPGRCR (63 aa)). Disulfide bonds link Cys13–Cys64, Cys17–Cys37, Cys23–Cys47, and Cys27–Cys49. Arg65 is modified (arginine amide).

This sequence belongs to the long (4 C-C) scorpion toxin superfamily. Sodium channel inhibitor family. Alpha subfamily. As to expression, expressed by the venom gland.

It localises to the secreted. Functionally, alpha toxins bind voltage-independently at site-3 of sodium channels (Nav) and inhibit the inactivation of the activated channels, thereby blocking neuronal transmission. Since the experiments have been done on F11 cells (immortalized cell line derived from rat DRG neurons mainly expressing Nav1.3/SCN3A, but also Nav1.7/SCN9A and Nav1.2/SCN2A), it is supposed to act on these channels. The slow of inactivation process is partially reversible. Is lethal to mice. This chain is Alpha-toxin Bu1, found in Buthacus macrocentrus (Turkish scorpion).